A 266-amino-acid polypeptide reads, in one-letter code: Signal peptidase I (266 aa).

Residues 1 to 20 lie on the Cytoplasmic side of the membrane; it reads MQTDNTKSNTNKTAKQEWWS. A helical membrane pass occupies residues 21–41; it reads CAFVICIALLIRILIMEPFTV. The Periplasmic segment spans residues 42-266; the sequence is PTGSMKATIL…IFRNLYNTDE (225 aa). Active-site residues include Ser45 and Lys108.

Belongs to the peptidase S26 family.

It localises to the cell inner membrane. It carries out the reaction Cleavage of hydrophobic, N-terminal signal or leader sequences from secreted and periplasmic proteins.. The sequence is that of Signal peptidase I (lepB) from Rickettsia akari (strain Hartford).